Consider the following 158-residue polypeptide: 2-C-methyl-D-erythritol 2,4-cyclodiphosphate synthase (158 aa).

Residues aspartate 9 and histidine 11 each coordinate a divalent metal cation. 4-CDP-2-C-methyl-D-erythritol 2-phosphate contacts are provided by residues 9–11 (DVH) and 35–36 (HS). Histidine 43 is a binding site for a divalent metal cation. 4-CDP-2-C-methyl-D-erythritol 2-phosphate contacts are provided by residues 57 to 59 (DIG), 62 to 66 (FPDTD), 101 to 107 (AQKPKMA), 133 to 136 (TTTE), phenylalanine 140, and arginine 143.

This sequence belongs to the IspF family. In terms of assembly, homotrimer. Requires a divalent metal cation as cofactor.

The catalysed reaction is 4-CDP-2-C-methyl-D-erythritol 2-phosphate = 2-C-methyl-D-erythritol 2,4-cyclic diphosphate + CMP. It functions in the pathway isoprenoid biosynthesis; isopentenyl diphosphate biosynthesis via DXP pathway; isopentenyl diphosphate from 1-deoxy-D-xylulose 5-phosphate: step 4/6. In terms of biological role, involved in the biosynthesis of isopentenyl diphosphate (IPP) and dimethylallyl diphosphate (DMAPP), two major building blocks of isoprenoid compounds. Catalyzes the conversion of 4-diphosphocytidyl-2-C-methyl-D-erythritol 2-phosphate (CDP-ME2P) to 2-C-methyl-D-erythritol 2,4-cyclodiphosphate (ME-CPP) with a corresponding release of cytidine 5-monophosphate (CMP). This is 2-C-methyl-D-erythritol 2,4-cyclodiphosphate synthase from Bacillus cereus (strain B4264).